Here is a 225-residue protein sequence, read N- to C-terminus: Glucose-induced degradation protein 8 homolog (225 aa).

Positions 22 to 54 (QRAEMNRLIMDYLVTEGYKEAAEKFRIESGTQP) constitute a LisH domain. The CTLH domain occupies 60 to 117 (SLDDRIKIREAVQKGDLEQAVSMTNKLNPDILDSNQQLYFHLQQQRLIELIREKDIEA).

It belongs to the GID8 family.

The protein resides in the cytoplasm. It localises to the nucleus. Functionally, core component of the CTLH E3 ubiquitin-protein ligase complex that mediates ubiquitination and subsequent proteasomal degradation of target proteins. Acts as a positive regulator of Wnt signaling pathway by promoting beta-catenin (CTNNB1) nuclear accumulation. The chain is Glucose-induced degradation protein 8 homolog from Nematostella vectensis (Starlet sea anemone).